Consider the following 234-residue polypeptide: Biosynthetic peptidoglycan transglycosylase (234 aa).

A helical membrane pass occupies residues 11–31; the sequence is RFLLFAMLGFVGLSVLLVLVF.

It belongs to the glycosyltransferase 51 family.

It is found in the cell inner membrane. The catalysed reaction is [GlcNAc-(1-&gt;4)-Mur2Ac(oyl-L-Ala-gamma-D-Glu-L-Lys-D-Ala-D-Ala)](n)-di-trans,octa-cis-undecaprenyl diphosphate + beta-D-GlcNAc-(1-&gt;4)-Mur2Ac(oyl-L-Ala-gamma-D-Glu-L-Lys-D-Ala-D-Ala)-di-trans,octa-cis-undecaprenyl diphosphate = [GlcNAc-(1-&gt;4)-Mur2Ac(oyl-L-Ala-gamma-D-Glu-L-Lys-D-Ala-D-Ala)](n+1)-di-trans,octa-cis-undecaprenyl diphosphate + di-trans,octa-cis-undecaprenyl diphosphate + H(+). The protein operates within cell wall biogenesis; peptidoglycan biosynthesis. Its function is as follows. Peptidoglycan polymerase that catalyzes glycan chain elongation from lipid-linked precursors. The sequence is that of Biosynthetic peptidoglycan transglycosylase from Chromohalobacter salexigens (strain ATCC BAA-138 / DSM 3043 / CIP 106854 / NCIMB 13768 / 1H11).